The primary structure comprises 366 residues: tRNA/tmRNA (uracil-C(5))-methyltransferase (366 aa).

Residues Q190, Y218, N223, E239, and D299 each contribute to the S-adenosyl-L-methionine site. C324 serves as the catalytic Nucleophile. E358 (proton acceptor) is an active-site residue.

This sequence belongs to the class I-like SAM-binding methyltransferase superfamily. RNA M5U methyltransferase family. TrmA subfamily.

It catalyses the reaction uridine(54) in tRNA + S-adenosyl-L-methionine = 5-methyluridine(54) in tRNA + S-adenosyl-L-homocysteine + H(+). The enzyme catalyses uridine(341) in tmRNA + S-adenosyl-L-methionine = 5-methyluridine(341) in tmRNA + S-adenosyl-L-homocysteine + H(+). In terms of biological role, dual-specificity methyltransferase that catalyzes the formation of 5-methyluridine at position 54 (m5U54) in all tRNAs, and that of position 341 (m5U341) in tmRNA (transfer-mRNA). This Escherichia coli O6:H1 (strain CFT073 / ATCC 700928 / UPEC) protein is tRNA/tmRNA (uracil-C(5))-methyltransferase.